Here is a 365-residue protein sequence, read N- to C-terminus: UDP-N-acetylglucosamine--N-acetylmuramyl-(pentapeptide) pyrophosphoryl-undecaprenol N-acetylglucosamine transferase (365 aa).

Residues 10-12 (TGG), Asn-128, Arg-170, Ser-199, Ile-250, and Gln-295 each bind UDP-N-acetyl-alpha-D-glucosamine.

This sequence belongs to the glycosyltransferase 28 family. MurG subfamily.

Its subcellular location is the cell inner membrane. The catalysed reaction is di-trans,octa-cis-undecaprenyl diphospho-N-acetyl-alpha-D-muramoyl-L-alanyl-D-glutamyl-meso-2,6-diaminopimeloyl-D-alanyl-D-alanine + UDP-N-acetyl-alpha-D-glucosamine = di-trans,octa-cis-undecaprenyl diphospho-[N-acetyl-alpha-D-glucosaminyl-(1-&gt;4)]-N-acetyl-alpha-D-muramoyl-L-alanyl-D-glutamyl-meso-2,6-diaminopimeloyl-D-alanyl-D-alanine + UDP + H(+). It participates in cell wall biogenesis; peptidoglycan biosynthesis. Its function is as follows. Cell wall formation. Catalyzes the transfer of a GlcNAc subunit on undecaprenyl-pyrophosphoryl-MurNAc-pentapeptide (lipid intermediate I) to form undecaprenyl-pyrophosphoryl-MurNAc-(pentapeptide)GlcNAc (lipid intermediate II). The protein is UDP-N-acetylglucosamine--N-acetylmuramyl-(pentapeptide) pyrophosphoryl-undecaprenol N-acetylglucosamine transferase of Pelodictyon phaeoclathratiforme (strain DSM 5477 / BU-1).